We begin with the raw amino-acid sequence, 357 residues long: Fluoren-9-ol dehydrogenase (357 aa).

Residues 36-67 and aspartate 87 contribute to the NADP(+) site; that span reads VTGG…TWDD. Tyrosine 198 (proton acceptor) is an active-site residue. An NADP(+)-binding site is contributed by lysine 202.

This sequence belongs to the short-chain dehydrogenases/reductases (SDR) family.

It catalyses the reaction 9H-fluoren-9-ol + NADP(+) = 9H-fluoren-9-one + NADPH + H(+). The enzyme catalyses 9H-fluoren-9-ol + NAD(+) = 9H-fluoren-9-one + NADH + H(+). It functions in the pathway aromatic compound metabolism. Its function is as follows. Catalyzes the dehydrogenation of both 9-fluorenol and 1,1a-dihydroxy-1-hydro-9-fluorenone to produce 9-fluorenone and 2'-carboxy-2,3- dihydroxybiphenyl, respectively. The polypeptide is Fluoren-9-ol dehydrogenase (Terrabacter sp. (strain DBF63)).